The chain runs to 315 residues: Aspartate carbamoyltransferase catalytic subunit (315 aa).

Carbamoyl phosphate contacts are provided by arginine 64 and threonine 65. An L-aspartate-binding site is contributed by lysine 92. 3 residues coordinate carbamoyl phosphate: arginine 114, histidine 142, and glutamine 145. Residues arginine 175 and arginine 229 each contribute to the L-aspartate site. Carbamoyl phosphate contacts are provided by glycine 270 and proline 271.

Belongs to the aspartate/ornithine carbamoyltransferase superfamily. ATCase family. In terms of assembly, heterododecamer (2C3:3R2) of six catalytic PyrB chains organized as two trimers (C3), and six regulatory PyrI chains organized as three dimers (R2).

It catalyses the reaction carbamoyl phosphate + L-aspartate = N-carbamoyl-L-aspartate + phosphate + H(+). It functions in the pathway pyrimidine metabolism; UMP biosynthesis via de novo pathway; (S)-dihydroorotate from bicarbonate: step 2/3. Catalyzes the condensation of carbamoyl phosphate and aspartate to form carbamoyl aspartate and inorganic phosphate, the committed step in the de novo pyrimidine nucleotide biosynthesis pathway. The sequence is that of Aspartate carbamoyltransferase catalytic subunit from Bradyrhizobium diazoefficiens (strain JCM 10833 / BCRC 13528 / IAM 13628 / NBRC 14792 / USDA 110).